The primary structure comprises 213 residues: ATP-dependent Clp protease proteolytic subunit (213 aa).

Catalysis depends on Ser-114, which acts as the Nucleophile. His-139 is a catalytic residue.

The protein belongs to the peptidase S14 family. In terms of assembly, fourteen ClpP subunits assemble into 2 heptameric rings which stack back to back to give a disk-like structure with a central cavity, resembling the structure of eukaryotic proteasomes.

The protein localises to the cytoplasm. The enzyme catalyses Hydrolysis of proteins to small peptides in the presence of ATP and magnesium. alpha-casein is the usual test substrate. In the absence of ATP, only oligopeptides shorter than five residues are hydrolyzed (such as succinyl-Leu-Tyr-|-NHMec, and Leu-Tyr-Leu-|-Tyr-Trp, in which cleavage of the -Tyr-|-Leu- and -Tyr-|-Trp bonds also occurs).. Functionally, cleaves peptides in various proteins in a process that requires ATP hydrolysis. Has a chymotrypsin-like activity. Plays a major role in the degradation of misfolded proteins. This is ATP-dependent Clp protease proteolytic subunit from Pseudomonas putida (strain GB-1).